The primary structure comprises 98 residues: ATP-dependent Clp protease adapter protein ClpS (98 aa).

Belongs to the ClpS family. Binds to the N-terminal domain of the chaperone ClpA.

In terms of biological role, involved in the modulation of the specificity of the ClpAP-mediated ATP-dependent protein degradation. This Synechocystis sp. (strain ATCC 27184 / PCC 6803 / Kazusa) protein is ATP-dependent Clp protease adapter protein ClpS.